The primary structure comprises 345 residues: MQINLNLKEKASSYKIYINELERLELKGKVGIVTNAKVAGLHLEKLLSVLKCDEKFIISVPDGEEYKNLTTIEQILEQLFVSKFDRSSTLIALGGGVISDMTGFAASIYERGISFINIPTTLLAQVDASVGGKTGVNNKFGKNLIGSFYQPKAVFCEINFLKTLPKREFAAGMAEALKMAITFDKEMFSWLKSVNLDDENLAKLVEKSINLKARVVEQDEKEKGLRAILNYGHTFAHVIENETNYKEFLHGEAVAIGMNMANRLSVRLGLMSEAQAEEIKQVLVKFDLPVSYKIENEYAFYEAFFMDKKTKGDKINFIIADKIGSAVIKNDVKKEDVLETLREFK.

NAD(+) is bound by residues 62 to 67 (DGEEYK), 96 to 100 (GVISD), 120 to 121 (TT), Lys-133, Lys-142, and 160 to 163 (FLKT). Zn(2+)-binding residues include Glu-175, His-233, and His-250.

It belongs to the sugar phosphate cyclases superfamily. Dehydroquinate synthase family. It depends on Co(2+) as a cofactor. Requires Zn(2+) as cofactor. NAD(+) serves as cofactor.

The protein localises to the cytoplasm. It catalyses the reaction 7-phospho-2-dehydro-3-deoxy-D-arabino-heptonate = 3-dehydroquinate + phosphate. It functions in the pathway metabolic intermediate biosynthesis; chorismate biosynthesis; chorismate from D-erythrose 4-phosphate and phosphoenolpyruvate: step 2/7. Its function is as follows. Catalyzes the conversion of 3-deoxy-D-arabino-heptulosonate 7-phosphate (DAHP) to dehydroquinate (DHQ). The sequence is that of 3-dehydroquinate synthase from Campylobacter concisus (strain 13826).